Consider the following 306-residue polypeptide: Oxygen-dependent coproporphyrinogen-III oxidase (306 aa).

Serine 94 provides a ligand contact to substrate. 2 residues coordinate a divalent metal cation: histidine 98 and histidine 108. Histidine 108 functions as the Proton donor in the catalytic mechanism. Substrate is bound at residue 110–112 (NVR). Positions 147 and 177 each coordinate a divalent metal cation. The important for dimerization stretch occupies residues 242 to 277 (YVEFNLVYDRGTLFGLQTGGRTESILMSMPPLVRWE). 260–262 (GGR) is a substrate binding site.

Belongs to the aerobic coproporphyrinogen-III oxidase family. As to quaternary structure, homodimer. Requires a divalent metal cation as cofactor.

The protein localises to the cytoplasm. The enzyme catalyses coproporphyrinogen III + O2 + 2 H(+) = protoporphyrinogen IX + 2 CO2 + 2 H2O. It functions in the pathway porphyrin-containing compound metabolism; protoporphyrin-IX biosynthesis; protoporphyrinogen-IX from coproporphyrinogen-III (O2 route): step 1/1. Functionally, involved in the heme biosynthesis. Catalyzes the aerobic oxidative decarboxylation of propionate groups of rings A and B of coproporphyrinogen-III to yield the vinyl groups in protoporphyrinogen-IX. The chain is Oxygen-dependent coproporphyrinogen-III oxidase from Shewanella woodyi (strain ATCC 51908 / MS32).